Consider the following 186-residue polypeptide: Large ribosomal subunit protein bL12c (186 aa).

The segment covering 1–11 has biased composition (polar residues); sequence MASTLSTITLR. 2 disordered regions span residues 1 to 23 and 162 to 186; these read MASTLSTITLRSPSPSTASSTHA and EGVSKDEAEDAKKQLEEAGAKVSIA. A chloroplast-targeting transit peptide spans 1–53; sequence MASTLSTITLRSPSPSTASSTHASIPFPKKALEFPIRTPKLHHRRATFLRPLA. A compositionally biased stretch (low complexity) spans 12–23; that stretch reads SPSPSTASSTHA. A compositionally biased stretch (basic and acidic residues) spans 162 to 180; the sequence is EGVSKDEAEDAKKQLEEAG.

Belongs to the bacterial ribosomal protein bL12 family.

The protein localises to the plastid. It localises to the chloroplast. This chain is Large ribosomal subunit protein bL12c (RPL12), found in Nicotiana tabacum (Common tobacco).